The sequence spans 100 residues: Small ribosomal subunit protein uS14 (100 aa).

The protein belongs to the universal ribosomal protein uS14 family. In terms of assembly, part of the 30S ribosomal subunit. Contacts proteins S3 and S10.

Functionally, binds 16S rRNA, required for the assembly of 30S particles and may also be responsible for determining the conformation of the 16S rRNA at the A site. The chain is Small ribosomal subunit protein uS14 from Prochlorococcus marinus (strain NATL1A).